Consider the following 317-residue polypeptide: MSCSNGIWPTVSNLCGSLSFFTSVISLFPQIIETYRDKSVDGLSPYFLLAWLCGDITSLIGAKLTGQLLFQILLAIYFLLNDSFVCGQYYYYGVLHENKLATVGHEPKPLLPELVENGELLREEEDMIQGGSSAESPRSSRRRSAITAALAIAHTISTASAYPLNVGSTQSQVGPPGDGKNSQLGTILSWIGASFYVGARIPQLIKNYNRKSTDGLSPFLFATTLLCNITYNLSIFTSCRFLDNQNKREFIVNELPFIFGSAGTIAFDLIYFYQYYILYATDMQLRELERELYSPEEDSAAQLVTERTSLLSGETQT.

Residues 1–13 lie on the Vacuolar side of the membrane; the sequence is MSCSNGIWPTVSN. Residues 8 to 71 form the PQ-loop 1 domain; the sequence is WPTVSNLCGS…AKLTGQLLFQ (64 aa). A helical membrane pass occupies residues 14 to 34; the sequence is LCGSLSFFTSVISLFPQIIET. At 35–39 the chain is on the cytoplasmic side; sequence YRDKS. A helical membrane pass occupies residues 40 to 62; it reads VDGLSPYFLLAWLCGDITSLIGA. At 63–71 the chain is on the vacuolar side; the sequence is KLTGQLLFQ. Residues 72 to 94 form a helical membrane-spanning segment; sequence ILLAIYFLLNDSFVCGQYYYYGV. Residues 95-143 are Cytoplasmic-facing; sequence LHENKLATVGHEPKPLLPELVENGELLREEEDMIQGGSSAESPRSSRRR. Position 136 is a phosphoserine (Ser-136). The helical transmembrane segment at 144–164 threads the bilayer; sequence SAITAALAIAHTISTASAYPL. Over 165 to 184 the chain is Vacuolar; that stretch reads NVGSTQSQVGPPGDGKNSQL. A helical membrane pass occupies residues 185–205; sequence GTILSWIGASFYVGARIPQLI. The PQ-loop 2 domain maps to 185-247; the sequence is GTILSWIGAS…SCRFLDNQNK (63 aa). Residues 206–215 lie on the Cytoplasmic side of the membrane; it reads KNYNRKSTDG. A helical transmembrane segment spans residues 216–236; that stretch reads LSPFLFATTLLCNITYNLSIF. Over 237-249 the chain is Vacuolar; the sequence is TSCRFLDNQNKRE. The chain crosses the membrane as a helical span at residues 250-270; that stretch reads FIVNELPFIFGSAGTIAFDLI. Residues 271 to 317 are Cytoplasmic-facing; sequence YFYQYYILYATDMQLRELERELYSPEEDSAAQLVTERTSLLSGETQT.

This sequence belongs to the laat-1 family.

It is found in the vacuole membrane. The catalysed reaction is L-histidine(out) + L-arginine(in) = L-histidine(in) + L-arginine(out). Functionally, amino acid transporter that moves arginine across the vacuolar membrane. Active during nitrogen starvation when it exports stored vacuolar arginine to the cytosol, for use as a nitrogen source. Has been shown to function as an arginine/histidine antiporter when substrate is present on both sides of the membrane, but may also function as a uniporter. This is Vacuolar arginine/histidine antiporter YPQ2 (YPQ2) from Saccharomyces cerevisiae (strain ATCC 204508 / S288c) (Baker's yeast).